The following is a 124-amino-acid chain: MMNMLLVSLGAVAGAILRWQLAVWFNPFLTQFAFGTLFVNLCGCFLIGITLGVNLQDAQKLLFVTGFLGSFTTFSSFSAEVSQFILSEKYWRGLAVISAHLIGGLVLTILGILVAKFWVSGRFY.

The next 4 membrane-spanning stretches (helical) occupy residues 5–25 (LLVSLGAVAGAILRWQLAVWF), 32–52 (FAFGTLFVNLCGCFLIGITLG), 61–81 (LLFVTGFLGSFTTFSSFSAEV), and 94–114 (LAVISAHLIGGLVLTILGILV). Residues G69 and T72 each contribute to the Na(+) site.

Belongs to the fluoride channel Fluc/FEX (TC 1.A.43) family.

The protein localises to the cell inner membrane. The catalysed reaction is fluoride(in) = fluoride(out). With respect to regulation, na(+) is not transported, but it plays an essential structural role and its presence is essential for fluoride channel function. Its function is as follows. Fluoride-specific ion channel. Important for reducing fluoride concentration in the cell, thus reducing its toxicity. This chain is Fluoride-specific ion channel FluC, found in Haemophilus ducreyi (strain 35000HP / ATCC 700724).